Reading from the N-terminus, the 196-residue chain is dTTP/UTP pyrophosphatase (196 aa).

Asp-73 functions as the Proton acceptor in the catalytic mechanism.

It belongs to the Maf family. YhdE subfamily. The cofactor is a divalent metal cation.

It is found in the cytoplasm. It carries out the reaction dTTP + H2O = dTMP + diphosphate + H(+). It catalyses the reaction UTP + H2O = UMP + diphosphate + H(+). Nucleoside triphosphate pyrophosphatase that hydrolyzes dTTP and UTP. May have a dual role in cell division arrest and in preventing the incorporation of modified nucleotides into cellular nucleic acids. This Myxococcus xanthus (strain DK1622) protein is dTTP/UTP pyrophosphatase.